The following is a 746-amino-acid chain: Actin filament-associated protein 1-like 1 (746 aa).

The segment at Glu88–Glu206 is disordered. Positions His98–Asp107 are enriched in polar residues. Positions Ser108–Glu119 are enriched in pro residues. Positions Ser139–Ser148 are enriched in low complexity. The region spanning Asp214–Gly310 is the PH 1 domain. A disordered region spans residues Glu336–Thr371. The span at Ser350–Lys359 shows a compositional bias: basic and acidic residues. Residues Arg406–Gly497 enclose the PH 2 domain. Disordered stretches follow at residues Glu539–Gln596 and Pro723–Thr746. A compositionally biased stretch (polar residues) spans Ser562–Ile575. Residues Gly591–Ala682 are a coiled coil. Residues Lys736–Thr746 are compositionally biased toward basic and acidic residues.

The protein resides in the cytoplasm. The protein localises to the cell projection. Its subcellular location is the podosome. It is found in the invadopodium. It localises to the cytoskeleton. The protein resides in the stress fiber. Its function is as follows. May be involved in podosome and invadosome formation. This Danio rerio (Zebrafish) protein is Actin filament-associated protein 1-like 1 (afap1l1).